The primary structure comprises 205 residues: MKASLALLSLLTAFTSHSLKSPAVPPTVVQIQANTNLAIADGARQQIGSTLFYDPAYVQLTYPGGDVPQERGVCSDVVIRALRSQKVDLQKLVHEDMAKNFAEYPQKWKLKRPDSNIDHRRVPNLETWFSRHDKTRPTSKNPSDYQAGDIVSWRLDNGLAHIGVVSDGFARDGTPLVIHNIGAGAQEEDVLFNWRMVGHYRYFVK.

An N-terminal signal peptide occupies residues 1–18; it reads MKASLALLSLLTAFTSHS.

This is an uncharacterized protein from Escherichia coli (strain K12).